Here is a 91-residue protein sequence, read N- to C-terminus: Probable Fe(2+)-trafficking protein (91 aa).

The protein belongs to the Fe(2+)-trafficking protein family.

Could be a mediator in iron transactions between iron acquisition and iron-requiring processes, such as synthesis and/or repair of Fe-S clusters in biosynthetic enzymes. The sequence is that of Probable Fe(2+)-trafficking protein from Cellvibrio japonicus (strain Ueda107) (Pseudomonas fluorescens subsp. cellulosa).